Consider the following 286-residue polypeptide: Probable ketoamine kinase YniA (286 aa).

ATP is bound at residue 91–93 (DYL). Asp193 functions as the Proton acceptor in the catalytic mechanism.

Belongs to the fructosamine kinase family.

Ketoamine kinase that phosphorylates ketoamines on the third carbon of the sugar moiety to generate ketoamine 3-phosphate. In Escherichia coli O157:H7, this protein is Probable ketoamine kinase YniA (yniA).